We begin with the raw amino-acid sequence, 79 residues long: Large ribosomal subunit protein uL24 (79 aa).

This sequence belongs to the universal ribosomal protein uL24 family. As to quaternary structure, part of the 50S ribosomal subunit.

In terms of biological role, one of two assembly initiator proteins, it binds directly to the 5'-end of the 23S rRNA, where it nucleates assembly of the 50S subunit. Its function is as follows. One of the proteins that surrounds the polypeptide exit tunnel on the outside of the subunit. The polypeptide is Large ribosomal subunit protein uL24 (Aliarcobacter butzleri (strain RM4018) (Arcobacter butzleri)).